A 199-amino-acid polypeptide reads, in one-letter code: Oligoribonuclease (199 aa).

The Exonuclease domain occupies 5–170 (LVWIDCEMTG…ADIRESIREL (166 aa)). Y127 is a catalytic residue.

Belongs to the oligoribonuclease family.

It localises to the cytoplasm. Its function is as follows. 3'-to-5' exoribonuclease specific for small oligoribonucleotides. The chain is Oligoribonuclease from Rhodococcus jostii (strain RHA1).